We begin with the raw amino-acid sequence, 416 residues long: Probable glucan 1,3-beta-glucosidase A (416 aa).

Residues 1–22 (MFVESAKKALLALSLLAASAQA) form the signal peptide. Residue Asn-183 is glycosylated (N-linked (GlcNAc...) asparagine). The active-site Proton donor is the Glu-210. Intrachain disulfides connect Cys-290/Cys-415 and Cys-316/Cys-342. Catalysis depends on Glu-308, which acts as the Nucleophile.

The protein belongs to the glycosyl hydrolase 5 (cellulase A) family. As to quaternary structure, monomer. It depends on Mn(2+) as a cofactor.

The protein resides in the secreted. The catalysed reaction is Successive hydrolysis of beta-D-glucose units from the non-reducing ends of (1-&gt;3)-beta-D-glucans, releasing alpha-glucose.. In terms of biological role, beta-glucanases participate in the metabolism of beta-glucan, the main structural component of the cell wall. It could also function biosynthetically as a transglycosylase. The protein is Probable glucan 1,3-beta-glucosidase A (exgA) of Aspergillus niger (strain ATCC MYA-4892 / CBS 513.88 / FGSC A1513).